A 559-amino-acid polypeptide reads, in one-letter code: Oxygen-dependent choline dehydrogenase (559 aa).

FAD is bound at residue 4–33 (DYIIIGAGSAGNVLAARLTEESDVSVLLLE). The tract at residues 182–202 (EGFGPMDRTVTPKGRRASTAR) is disordered. Catalysis depends on histidine 471, which acts as the Proton acceptor.

It belongs to the GMC oxidoreductase family. It depends on FAD as a cofactor.

The catalysed reaction is choline + A = betaine aldehyde + AH2. The enzyme catalyses betaine aldehyde + NAD(+) + H2O = glycine betaine + NADH + 2 H(+). The protein operates within amine and polyamine biosynthesis; betaine biosynthesis via choline pathway; betaine aldehyde from choline (cytochrome c reductase route): step 1/1. Its function is as follows. Involved in the biosynthesis of the osmoprotectant glycine betaine. Catalyzes the oxidation of choline to betaine aldehyde and betaine aldehyde to glycine betaine at the same rate. This is Oxygen-dependent choline dehydrogenase from Pectobacterium atrosepticum (strain SCRI 1043 / ATCC BAA-672) (Erwinia carotovora subsp. atroseptica).